We begin with the raw amino-acid sequence, 383 residues long: Galactokinase (383 aa).

A substrate-binding site is contributed by 34–37 (EHTD). 124 to 130 (GAGLSSS) is a binding site for ATP. Residues Ser130 and Glu162 each contribute to the Mg(2+) site. Residue Asp174 is the Proton acceptor of the active site. Tyr223 provides a ligand contact to substrate.

The protein belongs to the GHMP kinase family. GalK subfamily.

It localises to the cytoplasm. It carries out the reaction alpha-D-galactose + ATP = alpha-D-galactose 1-phosphate + ADP + H(+). The protein operates within carbohydrate metabolism; galactose metabolism. Its function is as follows. Catalyzes the transfer of the gamma-phosphate of ATP to D-galactose to form alpha-D-galactose-1-phosphate (Gal-1-P). The sequence is that of Galactokinase from Yersinia pseudotuberculosis serotype IB (strain PB1/+).